The sequence spans 201 residues: dCTP deaminase, dUMP-forming (201 aa).

DCTP is bound by residues 101–106 (KSSLGR), aspartate 119, 127–129 (TLE), glutamine 148, tyrosine 162, and glutamine 174. Residue glutamate 129 is the Proton donor/acceptor of the active site.

This sequence belongs to the dCTP deaminase family. Homotrimer.

The enzyme catalyses dCTP + 2 H2O = dUMP + NH4(+) + diphosphate. The protein operates within pyrimidine metabolism; dUMP biosynthesis; dUMP from dCTP: step 1/1. In terms of biological role, bifunctional enzyme that catalyzes both the deamination of dCTP to dUTP and the hydrolysis of dUTP to dUMP without releasing the toxic dUTP intermediate. The chain is dCTP deaminase, dUMP-forming from Parafrankia sp. (strain EAN1pec).